The chain runs to 194 residues: Ras-related protein Rab-22A (194 aa).

Position 12 to 20 (12 to 20 (GDTGVGKSS)) interacts with GTP. Residues 34–42 (INPTIGASF) carry the Effector region motif. GTP contacts are provided by residues 60 to 64 (DTAGQ), 118 to 121 (NKCD), and 148 to 150 (SAK). Positions 170 to 194 (DANPPSGGKGFKLRRQPSEPQRSCC) are disordered. Residues C193 and C194 are each lipidated (S-geranylgeranyl cysteine).

This sequence belongs to the small GTPase superfamily. Rab family. As to quaternary structure, interacts directly with ZFYVE20. Interacts (in its GTP-bound form) with RINL and RABGEF1. Binds EEA1.

The protein localises to the endosome membrane. The protein resides in the cell membrane. Its subcellular location is the early endosome. It localises to the late endosome. It is found in the cell projection. The protein localises to the ruffle. The protein resides in the cytoplasmic vesicle. Its subcellular location is the phagosome. It localises to the phagosome membrane. Functionally, plays a role in endocytosis and intracellular protein transport. Mediates trafficking of TF from early endosomes to recycling endosomes. Required for NGF-mediated endocytosis of NTRK1, and subsequent neurite outgrowth. Binds GTP and GDP and has low GTPase activity. Alternates between a GTP-bound active form and a GDP-bound inactive form. The protein is Ras-related protein Rab-22A (RAB22A) of Canis lupus familiaris (Dog).